A 601-amino-acid chain; its full sequence is Elongation factor 4 (601 aa).

The tr-type G domain maps to 5–187 (IRKKNFCIIA…AICKYVPSPK (183 aa)). GTP contacts are provided by residues 17–22 (DHGKST) and 134–137 (NKID).

It belongs to the TRAFAC class translation factor GTPase superfamily. Classic translation factor GTPase family. LepA subfamily.

The protein localises to the cell inner membrane. The catalysed reaction is GTP + H2O = GDP + phosphate + H(+). Functionally, required for accurate and efficient protein synthesis under certain stress conditions. May act as a fidelity factor of the translation reaction, by catalyzing a one-codon backward translocation of tRNAs on improperly translocated ribosomes. Back-translocation proceeds from a post-translocation (POST) complex to a pre-translocation (PRE) complex, thus giving elongation factor G a second chance to translocate the tRNAs correctly. Binds to ribosomes in a GTP-dependent manner. This Borreliella afzelii (strain PKo) (Borrelia afzelii) protein is Elongation factor 4.